The chain runs to 489 residues: Blue-light-activated histidine kinase (489 aa).

Residues 19 to 93 form the PAS domain; sequence ATDPFRAAVE…AIKSAIAAEK (75 aa). Cysteine 69 carries the post-translational modification S-4a-FMN cysteine. PAC domains are found at residues 93 to 147 and 232 to 281; these read KPID…ELEK and YSIE…NKAL. Residues 259 to 341 form an HWE histidine kinase domain region; sequence NPLVLGIVQD…LLKENWAGAT (83 aa). Histidine 288 is subject to Phosphohistidine; by autocatalysis.

Post-translationally, FMN binds covalently to cysteine after exposure to blue light and this bond is spontaneously broken in the dark.

It catalyses the reaction ATP + protein L-histidine = ADP + protein N-phospho-L-histidine.. Its function is as follows. Photosensitive kinase that is involved in increased bacterial virulence upon exposure to light. Once ejected from an infected animal host, sunlight acts as an environmental signal that increases the virulence of the bacterium, preparing it for infection of the next host. This photoreceptor protein is directly related to the bacterium's survival and replication within host macrophages. This Brucella ovis (strain ATCC 25840 / 63/290 / NCTC 10512) protein is Blue-light-activated histidine kinase.